We begin with the raw amino-acid sequence, 118 residues long: Fluoride-specific ion channel FluC 2 (118 aa).

A run of 4 helical transmembrane segments spans residues 1–21 (MIEA…RFAI), 33–53 (FPIA…YIIG), 55–75 (GVTT…FTTF), and 93–113 (TFLL…FLGM). Residues glycine 70 and threonine 73 each coordinate Na(+).

Belongs to the fluoride channel Fluc/FEX (TC 1.A.43) family.

It is found in the cell membrane. The enzyme catalyses fluoride(in) = fluoride(out). With respect to regulation, na(+) is not transported, but it plays an essential structural role and its presence is essential for fluoride channel function. Its function is as follows. Fluoride-specific ion channel. Important for reducing fluoride concentration in the cell, thus reducing its toxicity. The polypeptide is Fluoride-specific ion channel FluC 2 (Bacillus cereus (strain ZK / E33L)).